The primary structure comprises 1374 residues: Y' element ATP-dependent helicase YLL066C (1374 aa).

Positions 321-345 (AGEAASSDHDQKISRVTRKRPREPK) are disordered. The Helicase ATP-binding domain occupies 375 to 552 (EIYMADTPSV…LQRIGLTGLA (178 aa)). Position 388-395 (388-395 (APPGYGKT)) interacts with ATP. The DEAH box signature appears at 498 to 501 (DEFH). The 150-residue stretch at 609-758 (KLLLALFEIE…EFYGLESKKG (150 aa)) folds into the Helicase C-terminal domain. The span at 832-975 (ANASTNATTN…ATTTESTNAS (144 aa)) shows a compositional bias: low complexity. Positions 832 to 999 (ANASTNATTN…RFHPVTDINK (168 aa)) are disordered. Positions 976–999 (AKEDANKDGNAEDNRFHPVTDINK) are enriched in basic and acidic residues.

Belongs to the helicase family. Yeast subtelomeric Y' repeat subfamily.

Catalyzes DNA unwinding and is involved in telomerase-independent telomere maintenance. This chain is Y' element ATP-dependent helicase YLL066C, found in Saccharomyces cerevisiae (strain ATCC 204508 / S288c) (Baker's yeast).